The following is a 257-amino-acid chain: 1-(5-phosphoribosyl)-5-[(5-phosphoribosylamino)methylideneamino] imidazole-4-carboxamide isomerase (257 aa).

Aspartate 8 serves as the catalytic Proton acceptor. The Proton donor role is filled by aspartate 129.

It belongs to the HisA/HisF family.

The protein localises to the cytoplasm. It carries out the reaction 1-(5-phospho-beta-D-ribosyl)-5-[(5-phospho-beta-D-ribosylamino)methylideneamino]imidazole-4-carboxamide = 5-[(5-phospho-1-deoxy-D-ribulos-1-ylimino)methylamino]-1-(5-phospho-beta-D-ribosyl)imidazole-4-carboxamide. It functions in the pathway amino-acid biosynthesis; L-histidine biosynthesis; L-histidine from 5-phospho-alpha-D-ribose 1-diphosphate: step 4/9. The protein is 1-(5-phosphoribosyl)-5-[(5-phosphoribosylamino)methylideneamino] imidazole-4-carboxamide isomerase of Cyanothece sp. (strain PCC 7425 / ATCC 29141).